Reading from the N-terminus, the 90-residue chain is Co-chaperonin GroES (90 aa).

It belongs to the GroES chaperonin family. Heptamer of 7 subunits arranged in a ring. Interacts with the chaperonin GroEL.

It is found in the cytoplasm. Together with the chaperonin GroEL, plays an essential role in assisting protein folding. The GroEL-GroES system forms a nano-cage that allows encapsulation of the non-native substrate proteins and provides a physical environment optimized to promote and accelerate protein folding. GroES binds to the apical surface of the GroEL ring, thereby capping the opening of the GroEL channel. The sequence is that of Co-chaperonin GroES from Helicobacter hepaticus (strain ATCC 51449 / 3B1).